A 385-amino-acid polypeptide reads, in one-letter code: WD repeat-containing protein RUP1 (385 aa).

WD repeat units lie at residues 69-108 (TGSDAIGAIEFDPTGEIIATGGIARKIRSYRLSSLLESRD), 119-160 (CTPA…PVSE), 163-205 (EHGG…TLEE), 210-250 (GGGA…DPLI), 254-292 (GHTKTVTYARFMDSHTIVTGSTDGSLKQWDIDNGRRVVR), 298-337 (VNSRNFVGLSVWRHGGLVVSGSENNQVFVYDKRWEEPVWV), and 348-385 (SDRRFVSSVCLRQVDEDWCTLVAGGSDGALEIFSGKQS).

In terms of assembly, interacts with UVR8. Interacts directly with DHU1.

It localises to the nucleus. The protein localises to the cytoplasm. Its subcellular location is the cytosol. Its function is as follows. Functions in association with RUP2 as repressor of UV-B-induced photomorphogenesis mediated by UVR8 and HY5, likely in coordination with DHU1. Plays a crucial negative feedback regulatory role downstream of UVR8-COP1 to inhibit UVR8 function, balance UV-B-specific responses and ensure normal plant growth. Is involved in the regulation of photoperiodic flowering and vegetative development. This chain is WD repeat-containing protein RUP1, found in Arabidopsis thaliana (Mouse-ear cress).